Consider the following 166-residue polypeptide: ATP synthase subunit b (166 aa).

The chain crosses the membrane as a helical span at residues 27–47 (FFVVLLIFLIVLGVIAKWVVP). The segment at 124-143 (SADQQLSQQGSAAQSELQSS) is disordered.

This sequence belongs to the ATPase B chain family. In terms of assembly, F-type ATPases have 2 components, F(1) - the catalytic core - and F(0) - the membrane proton channel. F(1) has five subunits: alpha(3), beta(3), gamma(1), delta(1), epsilon(1). F(0) has three main subunits: a(1), b(2) and c(10-14). The alpha and beta chains form an alternating ring which encloses part of the gamma chain. F(1) is attached to F(0) by a central stalk formed by the gamma and epsilon chains, while a peripheral stalk is formed by the delta and b chains.

The protein resides in the cell membrane. Functionally, f(1)F(0) ATP synthase produces ATP from ADP in the presence of a proton or sodium gradient. F-type ATPases consist of two structural domains, F(1) containing the extramembraneous catalytic core and F(0) containing the membrane proton channel, linked together by a central stalk and a peripheral stalk. During catalysis, ATP synthesis in the catalytic domain of F(1) is coupled via a rotary mechanism of the central stalk subunits to proton translocation. Its function is as follows. Component of the F(0) channel, it forms part of the peripheral stalk, linking F(1) to F(0). This is ATP synthase subunit b from Mycolicibacterium vanbaalenii (strain DSM 7251 / JCM 13017 / BCRC 16820 / KCTC 9966 / NRRL B-24157 / PYR-1) (Mycobacterium vanbaalenii).